The following is a 277-amino-acid chain: Glycerol-3-phosphate acyltransferase (277 aa).

A run of 5 helical transmembrane segments spans residues 3 to 23, 55 to 75, 79 to 99, 111 to 131, and 155 to 175; these read LFIF…AIIV, IMVM…AKFL, PVTV…PVFF, IGAL…TWLL, and LILV…ILVL. Residues 207 to 277 are disordered; that stretch reads SPATSAEQEF…PKTKTVKEKE (71 aa). The span at 216–239 shows a compositional bias: basic and acidic residues; it reads FPGKEVIDTNIDETEKTEQAEAVK. Basic residues-rich tracts occupy residues 240 to 253 and 262 to 271; these read KPKV…AKKT and KPKSTKPKTK.

This sequence belongs to the PlsY family. As to quaternary structure, probably interacts with PlsX.

The protein resides in the cell inner membrane. It carries out the reaction an acyl phosphate + sn-glycerol 3-phosphate = a 1-acyl-sn-glycero-3-phosphate + phosphate. It functions in the pathway lipid metabolism; phospholipid metabolism. Its function is as follows. Catalyzes the transfer of an acyl group from acyl-phosphate (acyl-PO(4)) to glycerol-3-phosphate (G3P) to form lysophosphatidic acid (LPA). This enzyme utilizes acyl-phosphate as fatty acyl donor, but not acyl-CoA or acyl-ACP. In Legionella pneumophila subsp. pneumophila (strain Philadelphia 1 / ATCC 33152 / DSM 7513), this protein is Glycerol-3-phosphate acyltransferase.